The primary structure comprises 338 residues: UDP-3-O-acylglucosamine N-acyltransferase (338 aa).

The active-site Proton acceptor is the H239.

The protein belongs to the transferase hexapeptide repeat family. LpxD subfamily. Homotrimer.

The catalysed reaction is a UDP-3-O-[(3R)-3-hydroxyacyl]-alpha-D-glucosamine + a (3R)-hydroxyacyl-[ACP] = a UDP-2-N,3-O-bis[(3R)-3-hydroxyacyl]-alpha-D-glucosamine + holo-[ACP] + H(+). It participates in bacterial outer membrane biogenesis; LPS lipid A biosynthesis. Its function is as follows. Catalyzes the N-acylation of UDP-3-O-acylglucosamine using 3-hydroxyacyl-ACP as the acyl donor. Is involved in the biosynthesis of lipid A, a phosphorylated glycolipid that anchors the lipopolysaccharide to the outer membrane of the cell. This Xylella fastidiosa (strain M23) protein is UDP-3-O-acylglucosamine N-acyltransferase.